Here is a 171-residue protein sequence, read N- to C-terminus: Large ribosomal subunit protein bL17 (171 aa).

Residues 140 to 152 are compositionally biased toward basic and acidic residues; that stretch reads KREIQTKAREEKR. The tract at residues 140-171 is disordered; the sequence is KREIQTKAREEKRATRKSNSAPVNKETTSKKK. Residues 156–165 are compositionally biased toward polar residues; that stretch reads KSNSAPVNKE.

It belongs to the bacterial ribosomal protein bL17 family. As to quaternary structure, part of the 50S ribosomal subunit. Contacts protein L32.

This is Large ribosomal subunit protein bL17 from Leptospira interrogans serogroup Icterohaemorrhagiae serovar Lai (strain 56601).